A 442-amino-acid polypeptide reads, in one-letter code: Ribosomal protein uS12 methylthiotransferase RimO (442 aa).

The MTTase N-terminal domain maps to P9–P119. 6 residues coordinate [4Fe-4S] cluster: C18, C54, C83, C151, C155, and C158. The region spanning L137–R375 is the Radical SAM core domain. A TRAM domain is found at Q377–V442.

It belongs to the methylthiotransferase family. RimO subfamily. [4Fe-4S] cluster is required as a cofactor.

It is found in the cytoplasm. The enzyme catalyses L-aspartate(89)-[ribosomal protein uS12]-hydrogen + (sulfur carrier)-SH + AH2 + 2 S-adenosyl-L-methionine = 3-methylsulfanyl-L-aspartate(89)-[ribosomal protein uS12]-hydrogen + (sulfur carrier)-H + 5'-deoxyadenosine + L-methionine + A + S-adenosyl-L-homocysteine + 2 H(+). Its function is as follows. Catalyzes the methylthiolation of an aspartic acid residue of ribosomal protein uS12. This chain is Ribosomal protein uS12 methylthiotransferase RimO, found in Pectobacterium atrosepticum (strain SCRI 1043 / ATCC BAA-672) (Erwinia carotovora subsp. atroseptica).